The chain runs to 535 residues: F-box protein At1g56610 (535 aa).

3 helical membrane-spanning segments follow: residues 3-23 (FALVLIFLFGFYLFLMKSSSI), 37-57 (VLLLVLRFLFSLIQILILCLF), and 82-102 (LAPHILSWLPTKTAVTVSLLF). Residues 73–119 (TELCDLPKCLAPHILSWLPTKTAVTVSLLFMKGWWRSEMKNLSSLKF) enclose the F-box; degenerate domain.

As to quaternary structure, part of a SCF (ASK-cullin-F-box) protein ligase complex. Interacts with ASK4.

It localises to the membrane. Its pathway is protein modification; protein ubiquitination. In terms of biological role, component of SCF(ASK-cullin-F-box) E3 ubiquitin ligase complexes, which may mediate the ubiquitination and subsequent proteasomal degradation of target proteins. This Arabidopsis thaliana (Mouse-ear cress) protein is F-box protein At1g56610.